A 442-amino-acid chain; its full sequence is CAAX prenyl protease 1 homolog (442 aa).

At 1–62 (MDASCLFKAL…KARDYKIDNH (62 aa)) the chain is on the lumenal side. The helical transmembrane segment at 63 to 83 (LFGFFHSWFNQLLLTAQLIGG) threads the bilayer. Tyr-84 is a topological domain (cytoplasmic). The helical transmembrane segment at 85–105 (YPFLWYATASYPLHVAVFLSI) threads the bilayer. At 106-146 (NSIIETIIDLPWDLYSTFIIEDAHGFNKQTIGFYFVDKIKK) the chain is on the lumenal side. A helical membrane pass occupies residues 147–167 (MLVGFALTMPIVYGIEWIIVN). Residues 168–170 (GGP) lie on the Cytoplasmic side of the membrane. A helical transmembrane segment spans residues 171-191 (YFFVYIWLFVSVVVLLLMTIY). The Lumenal segment spans residues 192-311 (PTFIAPLFDK…ELGHWALWHT (120 aa)). His-301 is a Zn(2+) binding site. The active site involves Glu-302. His-305 is a Zn(2+) binding site. A helical transmembrane segment spans residues 312 to 332 (LINLVITEVNLFFSFAVFGYF). Topologically, residues 333–349 (YKWEALYQGFGYHDTPP) are cytoplasmic. The helical transmembrane segment at 350 to 370 (VIGMMLIFQFVLALYNQLASI) threads the bilayer. The Lumenal segment spans residues 371 to 442 (GMVIHSRSAE…AVRAFQAKNK (72 aa)). Glu-380 is a Zn(2+) binding site. The active-site Proton donor is the Asp-384.

It belongs to the peptidase M48A family. It depends on Zn(2+) as a cofactor.

Its subcellular location is the endoplasmic reticulum membrane. The protein resides in the membrane. It catalyses the reaction Hydrolyzes the peptide bond -P2-(S-farnesyl or geranylgeranyl)C-P1'-P2'-P3'-COOH where P1' and P2' are amino acids with aliphatic side chains and P3' is any C-terminal residue.. Its function is as follows. Proteolytically removes the C-terminal three residues of farnesylated proteins. The protein is CAAX prenyl protease 1 homolog of Caenorhabditis elegans.